We begin with the raw amino-acid sequence, 433 residues long: 5-methylthioadenosine/S-adenosylhomocysteine deaminase (433 aa).

2 residues coordinate Zn(2+): histidine 67 and histidine 69. Glutamate 96, arginine 148, and histidine 187 together coordinate substrate. Histidine 214 serves as a coordination point for Zn(2+). Substrate-binding residues include glutamate 217 and aspartate 302. Position 302 (aspartate 302) interacts with Zn(2+).

It belongs to the metallo-dependent hydrolases superfamily. MTA/SAH deaminase family. Requires Zn(2+) as cofactor.

It carries out the reaction S-adenosyl-L-homocysteine + H2O + H(+) = S-inosyl-L-homocysteine + NH4(+). It catalyses the reaction S-methyl-5'-thioadenosine + H2O + H(+) = S-methyl-5'-thioinosine + NH4(+). Its function is as follows. Catalyzes the deamination of 5-methylthioadenosine and S-adenosyl-L-homocysteine into 5-methylthioinosine and S-inosyl-L-homocysteine, respectively. Is also able to deaminate adenosine. In Carboxydothermus hydrogenoformans (strain ATCC BAA-161 / DSM 6008 / Z-2901), this protein is 5-methylthioadenosine/S-adenosylhomocysteine deaminase.